A 134-amino-acid polypeptide reads, in one-letter code: Large ribosomal subunit protein uL22 (134 aa).

This sequence belongs to the universal ribosomal protein uL22 family. In terms of assembly, part of the 50S ribosomal subunit.

Functionally, this protein binds specifically to 23S rRNA; its binding is stimulated by other ribosomal proteins, e.g. L4, L17, and L20. It is important during the early stages of 50S assembly. It makes multiple contacts with different domains of the 23S rRNA in the assembled 50S subunit and ribosome. The globular domain of the protein is located near the polypeptide exit tunnel on the outside of the subunit, while an extended beta-hairpin is found that lines the wall of the exit tunnel in the center of the 70S ribosome. The protein is Large ribosomal subunit protein uL22 of Karelsulcia muelleri (strain GWSS) (Sulcia muelleri).